The following is a 340-amino-acid chain: HPr kinase/phosphorylase (340 aa).

Active-site residues include His153 and Lys174. Gly168–Ser175 provides a ligand contact to ATP. Position 175 (Ser175) interacts with Mg(2+). Asp192 functions as the Proton acceptor; for phosphorylation activity. Proton donor; for dephosphorylation activity in the catalytic mechanism. The interval Met216 to Asp225 is important for the catalytic mechanism of both phosphorylation and dephosphorylation. Glu217 is a binding site for Mg(2+). Residue Arg258 is part of the active site. The interval Pro279 to Lys284 is important for the catalytic mechanism of dephosphorylation.

This sequence belongs to the HPrK/P family. Homohexamer. Requires Mg(2+) as cofactor.

It catalyses the reaction [HPr protein]-L-serine + ATP = [HPr protein]-O-phospho-L-serine + ADP + H(+). The catalysed reaction is [HPr protein]-O-phospho-L-serine + phosphate + H(+) = [HPr protein]-L-serine + diphosphate. Catalyzes the ATP- as well as the pyrophosphate-dependent phosphorylation of a specific serine residue in HPr, a phosphocarrier protein of the phosphoenolpyruvate-dependent sugar phosphotransferase system (PTS). HprK/P also catalyzes the pyrophosphate-producing, inorganic phosphate-dependent dephosphorylation (phosphorolysis) of seryl-phosphorylated HPr (P-Ser-HPr). The protein is HPr kinase/phosphorylase of Prosthecochloris aestuarii (strain DSM 271 / SK 413).